The primary structure comprises 498 residues: Pyruvate kinase (498 aa).

R53 is a binding site for substrate. Positions 55, 57, 87, and 88 each coordinate K(+). 55-58 (NFSH) serves as a coordination point for ATP. Residues R94 and K178 each coordinate ATP. Mg(2+) is bound at residue E240. Residues G263, D264, and T296 each contribute to the substrate site. D264 provides a ligand contact to Mg(2+).

Belongs to the pyruvate kinase family. As to quaternary structure, homotetramer. Requires Mg(2+) as cofactor. The cofactor is K(+).

The enzyme catalyses pyruvate + ATP = phosphoenolpyruvate + ADP + H(+). The protein operates within carbohydrate degradation; glycolysis; pyruvate from D-glyceraldehyde 3-phosphate: step 5/5. The polypeptide is Pyruvate kinase (PYK) (Trypanoplasma borreli).